Consider the following 397-residue polypeptide: Argininosuccinate synthase (397 aa).

7–15 (AFSGGLDTT) contacts ATP. Tyr-84 contributes to the L-citrulline binding site. Gly-114 lines the ATP pocket. Positions 116, 120, and 121 each coordinate L-aspartate. Asn-120 is an L-citrulline binding site. Residues Arg-124, Ser-170, Ser-179, Glu-254, and Tyr-266 each coordinate L-citrulline.

It belongs to the argininosuccinate synthase family. Type 1 subfamily. In terms of assembly, homotetramer.

The protein localises to the cytoplasm. The enzyme catalyses L-citrulline + L-aspartate + ATP = 2-(N(omega)-L-arginino)succinate + AMP + diphosphate + H(+). The protein operates within amino-acid biosynthesis; L-arginine biosynthesis; L-arginine from L-ornithine and carbamoyl phosphate: step 2/3. In Haloquadratum walsbyi (strain DSM 16790 / HBSQ001), this protein is Argininosuccinate synthase.